The sequence spans 377 residues: Putative glutamate--cysteine ligase 2 (377 aa).

Belongs to the glutamate--cysteine ligase type 2 family. YbdK subfamily.

The enzyme catalyses L-cysteine + L-glutamate + ATP = gamma-L-glutamyl-L-cysteine + ADP + phosphate + H(+). ATP-dependent carboxylate-amine ligase which exhibits weak glutamate--cysteine ligase activity. The polypeptide is Putative glutamate--cysteine ligase 2 (Pseudomonas aeruginosa (strain ATCC 15692 / DSM 22644 / CIP 104116 / JCM 14847 / LMG 12228 / 1C / PRS 101 / PAO1)).